An 890-amino-acid chain; its full sequence is MAAAASSSSAASLPQTGAEIRSAFLRFYEERGHKVMASASLIPEDPTVLLTIAGMLPFKPVFLGQQERPAPRATSSQKCIRTNDIENVGRTARHHTFFEMLGNFSFGDYFKQQAIEWAWQLSTEVYGIDPKHLVVSVFREDDEAEQIWRDVVGVNPKRIIRMDEADNFWASGPTGPCGPCSEIYYDFKPELGDEGIDLEDDDRFIEFYNLVFMQYNRDAEGSLTPLANRNIDTGLGLERMAQILQKVPNNYETDLIFPLIQAAADCAGVDYHQLDDAGKTSLKVIGDHSRAVTQLICDGVTASNLGRGYILRRLLRRVVRHGRLLGINKPFLVMMGEASIALLKDAHPSVLERQEVILAELQREESRFLETLERGEKLLSEVLDSKPKQISGAQAFELYDTYGFPLELTQEIAEEQGLEVDLAGFEEAMEQQRQRAKAAAVSIDLTLQDAIDQVVATQKATAFQGYQRLEQPSCVQALVANGEPATSASAGDHVQIVLESTPFYGEGGGQVGDRGVLSGADVIVAIESVSRSRDVFVHAGRIERGQLTVGDAITAQVDRACRRRAQANHTATHLLQAALKQVVDPGIGQAGSLVDFDRLRFDFHAPQAVTTEQLGQIETLINGWIAEAHGLLVEEMAIDQAKAAGAVAMFGEKYADVVRVVDVPGVSMELCGGTHVANTAEIGLFKIVGESGVAAGIRRIEAVAGASVLGYLNERELVVKQLGDRFKAQPGEIVERVVALQDELKSTGKALIAAQAELAVAKSAALATKAVAIGSFQLLVERLDGVDGTGLQGAAQSLAAQLGDGAAVVLGGLPDPSDQGKVILVAAFGKDVIAAKQQAGKFIGTIAKLCGGGGGGRPNLAQAGGRDGAALAGALETARMELTAALQQQG.

The Zn(2+) site is built by H569, H573, C671, and H675.

This sequence belongs to the class-II aminoacyl-tRNA synthetase family. Requires Zn(2+) as cofactor.

Its subcellular location is the cytoplasm. The enzyme catalyses tRNA(Ala) + L-alanine + ATP = L-alanyl-tRNA(Ala) + AMP + diphosphate. Its function is as follows. Catalyzes the attachment of alanine to tRNA(Ala) in a two-step reaction: alanine is first activated by ATP to form Ala-AMP and then transferred to the acceptor end of tRNA(Ala). Also edits incorrectly charged Ser-tRNA(Ala) and Gly-tRNA(Ala) via its editing domain. This is Alanine--tRNA ligase from Synechococcus sp. (strain CC9902).